The chain runs to 352 residues: Photosystem II D2 protein (352 aa).

A helical transmembrane segment spans residues Cys40–Thr60. His117 provides a ligand contact to chlorophyll a. A helical transmembrane segment spans residues Gly124–Pro140. Pheophytin a is bound by residues Gln129 and Asn142. Residues Val152–Ser165 form a helical membrane-spanning segment. His197 contacts chlorophyll a. A helical transmembrane segment spans residues Gly207–Glu227. The a plastoquinone site is built by His214 and Phe261. His214 is a binding site for Fe cation. His268 is a binding site for Fe cation. Residues Gly278–Arg294 traverse the membrane as a helical segment.

Belongs to the reaction center PufL/M/PsbA/D family. PSII is composed of 1 copy each of membrane proteins PsbA, PsbB, PsbC, PsbD, PsbE, PsbF, PsbH, PsbI, PsbJ, PsbK, PsbL, PsbM, PsbT, PsbX, PsbY, PsbZ, Psb30/Ycf12, peripheral proteins PsbO, CyanoQ (PsbQ), PsbU, PsbV and a large number of cofactors. It forms dimeric complexes. The D1/D2 heterodimer binds P680, chlorophylls that are the primary electron donor of PSII, and subsequent electron acceptors. It shares a non-heme iron and each subunit binds pheophytin, quinone, additional chlorophylls, carotenoids and lipids. There is also a Cl(-1) ion associated with D1 and D2, which is required for oxygen evolution. The PSII complex binds additional chlorophylls, carotenoids and specific lipids. serves as cofactor.

The protein localises to the cellular thylakoid membrane. The catalysed reaction is 2 a plastoquinone + 4 hnu + 2 H2O = 2 a plastoquinol + O2. Its function is as follows. Photosystem II (PSII) is a light-driven water:plastoquinone oxidoreductase that uses light energy to abstract electrons from H(2)O, generating O(2) and a proton gradient subsequently used for ATP formation. It consists of a core antenna complex that captures photons, and an electron transfer chain that converts photonic excitation into a charge separation. The D1/D2 (PsbA/PsbD) reaction center heterodimer binds P680, the primary electron donor of PSII as well as several subsequent electron acceptors. D2 is needed for assembly of a stable PSII complex. The chain is Photosystem II D2 protein from Synechococcus sp. (strain JA-3-3Ab) (Cyanobacteria bacterium Yellowstone A-Prime).